Consider the following 150-residue polypeptide: Ribonuclease H (150 aa).

The RNase H type-1 domain occupies 1 to 141 (MRPVIIHTDG…ADQLARDGLT (141 aa)). Residues Asp-9, Glu-47, Asp-69, and Asp-133 each coordinate Mg(2+).

The protein belongs to the RNase H family. In terms of assembly, monomer. Mg(2+) is required as a cofactor.

The protein localises to the cytoplasm. The enzyme catalyses Endonucleolytic cleavage to 5'-phosphomonoester.. Functionally, endonuclease that specifically degrades the RNA of RNA-DNA hybrids. In Rhodopseudomonas palustris (strain BisB5), this protein is Ribonuclease H.